A 272-amino-acid chain; its full sequence is tRNA uridine(34) hydroxylase (272 aa).

In terms of domain architecture, Rhodanese spans 121–217 (SRSDVYTIDT…YFKSTGNINN (97 aa)). Residue Cys177 is the Cysteine persulfide intermediate of the active site.

The protein belongs to the TrhO family.

The enzyme catalyses uridine(34) in tRNA + AH2 + O2 = 5-hydroxyuridine(34) in tRNA + A + H2O. Functionally, catalyzes oxygen-dependent 5-hydroxyuridine (ho5U) modification at position 34 in tRNAs. The sequence is that of tRNA uridine(34) hydroxylase from Ehrlichia ruminantium (strain Welgevonden).